A 192-amino-acid polypeptide reads, in one-letter code: uncharacterized protein (192 aa).

The 132-residue stretch at 29 to 160 (HRQAAVLIPI…PLDIYRRGDS (132 aa)) folds into the Nudix hydrolase domain. A Nudix box motif is present at residues 67–89 (GAVDDTDASVIAAALREAEEEVA). Mg(2+) is bound by residues glutamate 83 and glutamate 87.

The protein belongs to the Nudix hydrolase family. PCD1 subfamily. Mn(2+) is required as a cofactor. Requires Mg(2+) as cofactor.

Functionally, probably mediates the hydrolysis of some nucleoside diphosphate derivatives. This is an uncharacterized protein from Escherichia coli (strain SE11).